The sequence spans 339 residues: GTPase Obg (339 aa).

The Obg domain occupies 1–159 (MKFVDEAFVR…RELKLELKLL (159 aa)). In terms of domain architecture, OBG-type G spans 160–333 (ADVGLLGLPN…LCYDLMSFLE (174 aa)). GTP is bound by residues 166-173 (GLPNAGKS), 191-195 (FTTLY), 213-216 (DIPG), 283-286 (NKID), and 314-316 (SAI). Mg(2+) contacts are provided by Ser-173 and Thr-193.

This sequence belongs to the TRAFAC class OBG-HflX-like GTPase superfamily. OBG GTPase family. In terms of assembly, monomer. Mg(2+) serves as cofactor.

The protein localises to the cytoplasm. An essential GTPase which binds GTP, GDP and possibly (p)ppGpp with moderate affinity, with high nucleotide exchange rates and a fairly low GTP hydrolysis rate. Plays a role in control of the cell cycle, stress response, ribosome biogenesis and in those bacteria that undergo differentiation, in morphogenesis control. The protein is GTPase Obg of Coxiella burnetii (strain RSA 331 / Henzerling II).